Consider the following 441-residue polypeptide: Trigger factor (441 aa).

Residues 175–260 enclose the PPIase FKBP-type domain; that stretch reads GDKVVIDYNS…LVSIMVPKDV (86 aa).

This sequence belongs to the FKBP-type PPIase family. Tig subfamily.

Its subcellular location is the cytoplasm. It carries out the reaction [protein]-peptidylproline (omega=180) = [protein]-peptidylproline (omega=0). In terms of biological role, involved in protein export. Acts as a chaperone by maintaining the newly synthesized protein in an open conformation. Functions as a peptidyl-prolyl cis-trans isomerase. The protein is Trigger factor of Anaplasma marginale (strain St. Maries).